We begin with the raw amino-acid sequence, 279 residues long: Phosphonates import ATP-binding protein PhnC (279 aa).

In terms of domain architecture, ABC transporter spans 2–245 (FQLKNVTRQF…AVAAIYGAET (244 aa)). 34–41 (GRSGAGKS) lines the ATP pocket.

This sequence belongs to the ABC transporter superfamily. Phosphonates importer (TC 3.A.1.9.1) family. The complex is composed of two ATP-binding proteins (PhnC), two transmembrane proteins (PhnE) and a solute-binding protein (PhnD).

The protein resides in the cell inner membrane. The catalysed reaction is phosphonate(out) + ATP + H2O = phosphonate(in) + ADP + phosphate + H(+). Functionally, part of the ABC transporter complex PhnCDE involved in phosphonates import. Responsible for energy coupling to the transport system. The sequence is that of Phosphonates import ATP-binding protein PhnC from Rhizobium meliloti (strain 1021) (Ensifer meliloti).